The chain runs to 887 residues: Alanine--tRNA ligase (887 aa).

4 residues coordinate Zn(2+): His575, His579, Cys677, and His681.

This sequence belongs to the class-II aminoacyl-tRNA synthetase family. Zn(2+) is required as a cofactor.

The protein resides in the cytoplasm. The enzyme catalyses tRNA(Ala) + L-alanine + ATP = L-alanyl-tRNA(Ala) + AMP + diphosphate. In terms of biological role, catalyzes the attachment of alanine to tRNA(Ala) in a two-step reaction: alanine is first activated by ATP to form Ala-AMP and then transferred to the acceptor end of tRNA(Ala). Also edits incorrectly charged Ser-tRNA(Ala) and Gly-tRNA(Ala) via its editing domain. The chain is Alanine--tRNA ligase from Geobacillus kaustophilus (strain HTA426).